Consider the following 308-residue polypeptide: Ornithine carbamoyltransferase (308 aa).

Carbamoyl phosphate-binding positions include 53 to 56, Q80, R104, and 131 to 134; these read STRT and HPCQ. L-ornithine contacts are provided by residues N162, D225, and 229-230; that span reads SM. Carbamoyl phosphate is bound by residues 265-266 and R293; that span reads CL.

It belongs to the aspartate/ornithine carbamoyltransferase superfamily. OTCase family.

Its subcellular location is the cytoplasm. It catalyses the reaction carbamoyl phosphate + L-ornithine = L-citrulline + phosphate + H(+). It functions in the pathway amino-acid biosynthesis; L-arginine biosynthesis; L-arginine from L-ornithine and carbamoyl phosphate: step 1/3. Its function is as follows. Reversibly catalyzes the transfer of the carbamoyl group from carbamoyl phosphate (CP) to the N(epsilon) atom of ornithine (ORN) to produce L-citrulline. The sequence is that of Ornithine carbamoyltransferase (argF) from Synechocystis sp. (strain ATCC 27184 / PCC 6803 / Kazusa).